Here is a 625-residue protein sequence, read N- to C-terminus: Endoglucanase 13 (625 aa).

The signal sequence occupies residues 1–34 (MAATMNKTPATTFLLIPAAASLVLLLAAAASVEA). The active-site Nucleophile is the Asp-91. Residue His-427 is part of the active site. Asn-440 carries an N-linked (GlcNAc...) asparagine glycan. Residues Asp-479 and Glu-488 contribute to the active site. The disordered stretch occupies residues 509 to 530 (ADNTPEYTPAPNAPSPSNGGSP).

This sequence belongs to the glycosyl hydrolase 9 (cellulase E) family. As to expression, expressed in roots and flowers.

The protein resides in the secreted. It catalyses the reaction Endohydrolysis of (1-&gt;4)-beta-D-glucosidic linkages in cellulose, lichenin and cereal beta-D-glucans.. This Oryza sativa subsp. japonica (Rice) protein is Endoglucanase 13 (GLU6).